A 335-amino-acid polypeptide reads, in one-letter code: Transmembrane protein 120B-B (335 aa).

The stretch at 1–39 forms a coiled coil; it reads MSLQKCQEEWGELEKEFQQLQETHKVYKQKLEELSSLQN. 6 consecutive transmembrane segments (helical) span residues 100 to 116, 130 to 150, 157 to 177, 193 to 213, 268 to 288, and 300 to 320; these read SLYLNLVLGNVNVTLLS, FKLYLTIILLLGAITCRFVLH, VFNFLLVWYFCTLTIRESILI, VSTFLSGVMLTWPDGLMYQMF, FLLPVLFFGHFWQLYNAMTLF, and QVFVLALTFLLLFLGNFLTTL.

It belongs to the TMEM120 family.

It is found in the nucleus inner membrane. In terms of biological role, necessary for efficient adipogenesis. Does not show ion channel activity. In Xenopus laevis (African clawed frog), this protein is Transmembrane protein 120B-B (tmem120b-b).